Here is a 201-residue protein sequence, read N- to C-terminus: Peptidyl-prolyl cis-trans isomerase CYP19-4 (201 aa).

The signal sequence occupies residues 1 to 23 (MAKASFILLGTLFLFGAIASIQA). Residues 35 to 198 (YFDVEIDGKS…SKVVIADSGE (164 aa)) form the PPIase cyclophilin-type domain.

The protein belongs to the cyclophilin-type PPIase family. In terms of assembly, interacts with EMB30/GNOM. In terms of tissue distribution, ubiquitous, mostly in aerial organs (at protein level).

Its subcellular location is the cytoplasm. The protein localises to the membrane. It is found in the endoplasmic reticulum. It localises to the secreted. It carries out the reaction [protein]-peptidylproline (omega=180) = [protein]-peptidylproline (omega=0). With respect to regulation, binds cyclosporin A (CsA). CsA mediates some of its effects via an inhibitory action on PPIase. In terms of biological role, PPIases accelerate the folding of proteins. It catalyzes the cis-trans isomerization of proline imidic peptide bonds in oligopeptides. May be involved during embryogenesis and organ development by regulating the folding of EMB30/GNOM, and thus, by modulating its activity. This chain is Peptidyl-prolyl cis-trans isomerase CYP19-4 (CYP19-4), found in Arabidopsis thaliana (Mouse-ear cress).